We begin with the raw amino-acid sequence, 429 residues long: MNREKSTQLFAEAQHYIPGGVNSPVRAFKSVGGNPVYIEKGEGSRIFDVDGNSYIDYIGSWGPLILGHAHPRVLAAITEVAALGTSFGAPTERETEMAKLVCEIVPSVEVVRMVNSGTEATMSALRLARGYTRRNKIMKFEGCYHGHADSLLIKAGSGVATLGLPDSPGVPEGTAHNTITVPYNDLESVKLAFEAFGDDLAAVIVEPIGGNMGVVPPQPGFLEGLREITEKHGTLLIFDEVMTGFRVALGGAQELYGITPDLTTMGKVIGGGLPVGAYGGKREIMQQVAPAGPIYQAGTLSGNPLAMAAGLTTLQELSKPGAYERLEKMSARLAEGLADNAKKLGIPHTLNRVGSMVCLFFTETPVINYETAKTSDLERFSAYFSYLLEEGVMIPPSQFEGMFVSLAHTDEDIERTIEASYQAMKKAFK.

The residue at position 267 (lysine 267) is an N6-(pyridoxal phosphate)lysine.

Belongs to the class-III pyridoxal-phosphate-dependent aminotransferase family. HemL subfamily. Homodimer. Pyridoxal 5'-phosphate is required as a cofactor.

It localises to the cytoplasm. The enzyme catalyses (S)-4-amino-5-oxopentanoate = 5-aminolevulinate. It participates in porphyrin-containing compound metabolism; protoporphyrin-IX biosynthesis; 5-aminolevulinate from L-glutamyl-tRNA(Glu): step 2/2. The protein is Glutamate-1-semialdehyde 2,1-aminomutase 2 of Brevibacillus brevis (strain 47 / JCM 6285 / NBRC 100599).